The sequence spans 862 residues: DNA replication licensing factor MCM4 (862 aa).

Positions 1 to 10 (MSSPASTPSR) are enriched in low complexity. 2 disordered regions span residues 1 to 71 (MSSP…FSSP) and 90 to 121 (TYGTPSSRVEGTPRSGVRGTPVRQRPDLGSAR). Serine 2 is subject to N-acetylserine. Phosphoserine is present on serine 6. Phosphothreonine is present on residues threonine 7 and threonine 19. 3 positions are modified to phosphoserine: serine 26, serine 31, and serine 32. Polar residues predominate over residues 61 to 71 (PPAQNALFSSP). The residue at position 101 (threonine 101) is a Phosphothreonine. Residue serine 104 is modified to Phosphoserine. At threonine 109 the chain carries Phosphothreonine. Phosphoserine occurs at positions 119, 130, 141, and 144. Residue lysine 219 is modified to N6-acetyllysine. A Glycyl lysine isopeptide (Lys-Gly) (interchain with G-Cter in SUMO2) cross-link involves residue lysine 438. Lysine 449 is modified (N6-acetyllysine). The region spanning 457 to 666 (IYERLASALA…YDRRLAHHLV (210 aa)) is the MCM domain. ATP-binding residues include tyrosine 470, arginine 496, lysine 515, serine 516, asparagine 617, arginine 642, arginine 731, and glutamate 734. The Arginine finger signature appears at 641 to 644 (SRFD). Lysine 797 participates in a covalent cross-link: Glycyl lysine isopeptide (Lys-Gly) (interchain with G-Cter in SUMO2). An N6-acetyllysine modification is found at lysine 857.

This sequence belongs to the MCM family. Component of the MCM2-7 complex. The complex forms a toroidal hexameric ring with the proposed subunit order MCM2-MCM6-MCM4-MCM7-MCM3-MCM5. Component of the CMG helicase complex, a hexameric ring of related MCM2-7 subunits stabilized by CDC45 and the tetrameric GINS complex. Interacts with MCMBP. In terms of processing, sumoylated; SUMO2 modified in response to stress caused by inhibition of proteasome activity (in vitro).

The protein localises to the nucleus. The protein resides in the chromosome. The enzyme catalyses ATP + H2O = ADP + phosphate + H(+). Functionally, acts as a component of the MCM2-7 complex (MCM complex) which is the replicative helicase essential for 'once per cell cycle' DNA replication initiation and elongation in eukaryotic cells. Core component of CDC45-MCM-GINS (CMG) helicase, the molecular machine that unwinds template DNA during replication, and around which the replisome is built. The active ATPase sites in the MCM2-7 ring are formed through the interaction surfaces of two neighboring subunits such that a critical structure of a conserved arginine finger motif is provided in trans relative to the ATP-binding site of the Walker A box of the adjacent subunit. The six ATPase active sites, however, are likely to contribute differentially to the complex helicase activity. This Mus musculus (Mouse) protein is DNA replication licensing factor MCM4 (Mcm4).